A 147-amino-acid chain; its full sequence is Large ribosomal subunit protein uL15 (147 aa).

A disordered region spans residues 1–46; the sequence is MSIRLENLSYTPGARKEKHRKGRGHAAGKGKQAGRGQSGQKKRSTV. The span at 16-28 shows a compositional bias: basic residues; that stretch reads KEKHRKGRGHAAG.

Belongs to the universal ribosomal protein uL15 family. In terms of assembly, part of the 50S ribosomal subunit.

Binds to the 23S rRNA. The polypeptide is Large ribosomal subunit protein uL15 (Mesomycoplasma hyopneumoniae (strain 232) (Mycoplasma hyopneumoniae)).